Here is a 311-residue protein sequence, read N- to C-terminus: Probable lipid kinase YegS-like (311 aa).

Residues 9–140 (EHDGDTWLIL…VDVGTLGDDY (132 aa)) form the DAGKc domain. ATP contacts are provided by residues Thr-47, 73-79 (GDGTVNE), and Ser-102. Positions 221, 224, and 226 each coordinate Mg(2+). The active-site Proton acceptor is Glu-281.

This sequence belongs to the diacylglycerol/lipid kinase family. YegS lipid kinase subfamily. Mg(2+) serves as cofactor. The cofactor is Ca(2+).

It is found in the cytoplasm. In terms of biological role, probably phosphorylates lipids; the in vivo substrate is unknown. This is Probable lipid kinase YegS-like from Chromohalobacter salexigens (strain ATCC BAA-138 / DSM 3043 / CIP 106854 / NCIMB 13768 / 1H11).